The primary structure comprises 462 residues: SET domain-containing protein SmydA-8, isoform A (462 aa).

Residues 55–287 (PNWTISSSTV…KGGEITTTYT (233 aa)) form the SET domain.

It belongs to the class V-like SAM-binding methyltransferase superfamily.

The protein is SET domain-containing protein SmydA-8, isoform A of Drosophila melanogaster (Fruit fly).